A 474-amino-acid polypeptide reads, in one-letter code: Amidophosphoribosyltransferase (474 aa).

The propeptide occupies 1–10; it reads MLGESEVRDK. Catalysis depends on cysteine 11, which acts as the Nucleophile. Positions 11 to 234 constitute a Glutamine amidotransferase type-2 domain; it reads CGIVGIYSQD…PGEILHLNRG (224 aa). Position 250 (cysteine 250) interacts with [4Fe-4S] cluster. The Mg(2+) site is built by serine 297, aspartate 359, and aspartate 360. 3 residues coordinate [4Fe-4S] cluster: cysteine 396, cysteine 447, and cysteine 450.

It in the C-terminal section; belongs to the purine/pyrimidine phosphoribosyltransferase family. Mg(2+) is required as a cofactor. The cofactor is [4Fe-4S] cluster.

It carries out the reaction 5-phospho-beta-D-ribosylamine + L-glutamate + diphosphate = 5-phospho-alpha-D-ribose 1-diphosphate + L-glutamine + H2O. Its pathway is purine metabolism; IMP biosynthesis via de novo pathway; N(1)-(5-phospho-D-ribosyl)glycinamide from 5-phospho-alpha-D-ribose 1-diphosphate: step 1/2. Its function is as follows. Catalyzes the formation of phosphoribosylamine from phosphoribosylpyrophosphate (PRPP) and glutamine. This Methanothermobacter thermautotrophicus (strain ATCC 29096 / DSM 1053 / JCM 10044 / NBRC 100330 / Delta H) (Methanobacterium thermoautotrophicum) protein is Amidophosphoribosyltransferase.